The following is a 452-amino-acid chain: Envelope glycoprotein D (452 aa).

An N-terminal signal peptide occupies residues 1 to 19 (MPAVLLVLYVNPPPSVCIL). Residues 20 to 405 (TQKLSLGLYN…NSTFVGISVG (386 aa)) lie on the Virion surface side of the membrane. N-linked (GlcNAc...) asparagine; by host glycosylation is found at asparagine 103 and asparagine 111. Cystine bridges form between cysteine 138/cysteine 259, cysteine 176/cysteine 273, and cysteine 188/cysteine 197. The disordered stretch occupies residues 331-365 (PDNHPGFDSVESEITQNKTDPKPGQADPKPNQPFK). N-linked (GlcNAc...) asparagine; by host glycosylation is found at asparagine 347 and asparagine 396. Residues 406–422 (LGIAGLVLVGVILYVCL) form a helical membrane-spanning segment. Residues 423-452 (RRKKELKKSAQNGLTRLRSTFKDVKYTQLP) are Intravirion-facing.

This sequence belongs to the herpesviridae glycoprotein D family.

It is found in the virion membrane. Functionally, envelope glycoprotein that binds to host cell entry receptors, promoting the virus entry into host cells. May trigger fusion with host membrane, by recruiting the fusion machinery composed of gB and gH/gL. This chain is Envelope glycoprotein D (gD), found in Equine herpesvirus 1 (strain Ab4p) (EHV-1).